Here is a 340-residue protein sequence, read N- to C-terminus: Selenide, water dikinase (340 aa).

Residue Sec17 is part of the active site. A non-standard amino acid (selenocysteine) is located at residue Sec17. Residues Lys20 and 45-47 (NNE) each bind ATP. Asp48 is a binding site for Mg(2+). Residues Asp65, Asp88, and 136-138 (GHT) contribute to the ATP site. Mg(2+) is bound at residue Asp88. Mg(2+) is bound at residue Asp224.

This sequence belongs to the selenophosphate synthase 1 family. Class I subfamily. Homodimer. Requires Mg(2+) as cofactor.

The enzyme catalyses hydrogenselenide + ATP + H2O = selenophosphate + AMP + phosphate + 2 H(+). Its function is as follows. Synthesizes selenophosphate from selenide and ATP. The protein is Selenide, water dikinase of Campylobacter jejuni (strain RM1221).